Reading from the N-terminus, the 206-residue chain is Octanoyltransferase (206 aa).

The BPL/LPL catalytic domain occupies 30–206 (PETNDEIWLV…EFVTLLNNSI (177 aa)). Substrate is bound by residues 69-76 (RGGQVTYH), 137-139 (SLG), and 150-152 (GIA). The active-site Acyl-thioester intermediate is cysteine 168.

It belongs to the LipB family.

It is found in the cytoplasm. The enzyme catalyses octanoyl-[ACP] + L-lysyl-[protein] = N(6)-octanoyl-L-lysyl-[protein] + holo-[ACP] + H(+). The protein operates within protein modification; protein lipoylation via endogenous pathway; protein N(6)-(lipoyl)lysine from octanoyl-[acyl-carrier-protein]: step 1/2. Functionally, catalyzes the transfer of endogenously produced octanoic acid from octanoyl-acyl-carrier-protein onto the lipoyl domains of lipoate-dependent enzymes. Lipoyl-ACP can also act as a substrate although octanoyl-ACP is likely to be the physiological substrate. The chain is Octanoyltransferase from Francisella tularensis subsp. mediasiatica (strain FSC147).